Consider the following 1081-residue polypeptide: Inversin (1081 aa).

ANK repeat units follow at residues 13-42, 47-76, 80-110, 113-144, 148-177, 181-213, 220-250, 254-283, 288-317, 321-350, 356-385, 389-418, 422-451, 455-484, 488-517, and 523-553; these read SLAS…ALKD, FGRT…DVNK, SQRT…WMQK, EEMT…EVDT, NKQT…NIGI, EGKI…TESL, EGRT…NITS, LFRT…SGTI, QGAT…VKDD, EGRT…DIDI, YGGT…QVDA, MKHT…RVDL, DGHS…NPNV, AGRT…DPNI, EGRT…FPNQ, and ERYT…SIAA. At Asn75 the chain carries 3-hydroxyasparagine. The D-box 1 signature appears at 490–498; it reads RTALHWSCN. Positions 555–584 constitute an IQ 1 domain; the sequence is QDIAAFKIQAVYKGYKVRKAFRDRKNLLMK. Positions 589–610 are enriched in basic and acidic residues; sequence RKDAAAKKREEENKRREAEQQK. A disordered region spans residues 589–889; sequence RKDAAAKKRE…PAPGPLSGQS (301 aa). The span at 638–649 shows a compositional bias: polar residues; the sequence is RAPSKQPPSSEA. Basic and acidic residues-rich tracts occupy residues 688–698, 724–740, and 772–785; these read KPNESPREQCK, EKSR…DKGK, and DGHR…DTAS. Positions 863-872 are enriched in polar residues; it reads SGTSTLSEDA. The D-box 2 signature appears at 910–918; sequence RKELFRKKN. Residues 917–946 form the IQ 2 domain; sequence KNKAAAVIQRAWRSYQLRKHLSHLLHMKEL. The ANK 17 repeat unit spans residues 1022–1050; the sequence is RTHSVLHLNSVSNLQCIHLLENSGRSKNF. Positions 1051 to 1061 are enriched in polar residues; the sequence is SYNLQSATPPK. The tract at residues 1051 to 1081 is disordered; the sequence is SYNLQSATPPKTKTKLRPSLEEECVRGSWNS.

As to quaternary structure, binds calmodulin via its IQ domains. Interacts with APC2. Interacts with alpha-, beta-, and gamma-catenin. Interacts with N-cadherin (CDH2). Interacts with NPHP1. Interacts with DVL1, PRICKLE (PRICKLE1 or PRICKLE2) and Strabismus (VANGL1 or VANGL2). Component of a complex containing at least ANKS6, INVS, NEK8 and NPHP3. ANKS6 may organize complex assembly by linking INVS and NPHP3 to NEK8 and INVS may target the complex to the proximal ciliary axoneme. Interacts with IQCB1; the interaction likely requires additional interactors. Interacts with microtubules. May be ubiquitinated via its interaction with APC2. Post-translationally, hydroxylated at Asn-75, most probably by HIF1AN.

It localises to the cytoplasm. The protein resides in the cytoskeleton. Its subcellular location is the membrane. The protein localises to the spindle. It is found in the nucleus. Its function is as follows. Required for normal renal development and establishment of left-right axis. Probably acts as a molecular switch between different Wnt signaling pathways. Inhibits the canonical Wnt pathway by targeting cytoplasmic disheveled (DVL1) for degradation by the ubiquitin-proteasome. This suggests that it is required in renal development to oppose the repression of terminal differentiation of tubular epithelial cells by Wnt signaling. Involved in the organization of apical junctions in kidney cells together with NPHP1, NPHP4 and RPGRIP1L/NPHP8. Does not seem to be strictly required for ciliogenesis. This is Inversin (INVS) from Canis lupus familiaris (Dog).